The following is a 130-amino-acid chain: UPF0102 protein AHA_3896 (130 aa).

This sequence belongs to the UPF0102 family.

This chain is UPF0102 protein AHA_3896, found in Aeromonas hydrophila subsp. hydrophila (strain ATCC 7966 / DSM 30187 / BCRC 13018 / CCUG 14551 / JCM 1027 / KCTC 2358 / NCIMB 9240 / NCTC 8049).